A 509-amino-acid chain; its full sequence is Ribonuclease Y (509 aa).

The helical transmembrane segment at 5 to 25 (IIILLSVFCGIFFICFIICSS) threads the bilayer. In terms of domain architecture, KH spans 199–259 (TTNIVKLPSD…IRREIATRTL (61 aa)). Residues 325 to 418 (VLAHSIEVAK…VAIADSISAS (94 aa)) enclose the HD domain.

It belongs to the RNase Y family.

Its subcellular location is the cell membrane. In terms of biological role, endoribonuclease that initiates mRNA decay. This is Ribonuclease Y from Mycoplasma capricolum subsp. capricolum (strain California kid / ATCC 27343 / NCTC 10154).